The sequence spans 69 residues: DNA gyrase inhibitor YacG (69 aa).

Residues cysteine 7, cysteine 10, cysteine 26, and cysteine 30 each contribute to the Zn(2+) site.

This sequence belongs to the DNA gyrase inhibitor YacG family. In terms of assembly, interacts with GyrB. The cofactor is Zn(2+).

In terms of biological role, inhibits all the catalytic activities of DNA gyrase by preventing its interaction with DNA. Acts by binding directly to the C-terminal domain of GyrB, which probably disrupts DNA binding by the gyrase. In Shewanella baltica (strain OS195), this protein is DNA gyrase inhibitor YacG.